The sequence spans 482 residues: ATP synthase subunit beta (482 aa).

An ATP-binding site is contributed by 162 to 169 (GGAGVGKT).

The protein belongs to the ATPase alpha/beta chains family. As to quaternary structure, F-type ATPases have 2 components, CF(1) - the catalytic core - and CF(0) - the membrane proton channel. CF(1) has five subunits: alpha(3), beta(3), gamma(1), delta(1), epsilon(1). CF(0) has four main subunits: a(1), b(1), b'(1) and c(9-12).

The protein localises to the cellular thylakoid membrane. It catalyses the reaction ATP + H2O + 4 H(+)(in) = ADP + phosphate + 5 H(+)(out). Its function is as follows. Produces ATP from ADP in the presence of a proton gradient across the membrane. The catalytic sites are hosted primarily by the beta subunits. This chain is ATP synthase subunit beta, found in Nostoc sp. (strain PCC 7120 / SAG 25.82 / UTEX 2576).